The primary structure comprises 290 residues: 33 kDa chaperonin (290 aa).

Disulfide bonds link C235–C237 and C268–C271.

This sequence belongs to the HSP33 family. In terms of processing, under oxidizing conditions two disulfide bonds are formed involving the reactive cysteines. Under reducing conditions zinc is bound to the reactive cysteines and the protein is inactive.

The protein resides in the cytoplasm. In terms of biological role, redox regulated molecular chaperone. Protects both thermally unfolding and oxidatively damaged proteins from irreversible aggregation. Plays an important role in the bacterial defense system toward oxidative stress. The chain is 33 kDa chaperonin from Streptococcus sanguinis (strain SK36).